Reading from the N-terminus, the 497-residue chain is Endoglucanase 17 (497 aa).

The first 21 residues, 1–21 (MAAAGGAVLLLVLATATSVTG), serve as a signal peptide directing secretion. The Nucleophile role is filled by aspartate 77. Residue histidine 406 is part of the active site. Asparagine 451 carries an N-linked (GlcNAc...) asparagine glycan. Residues aspartate 458 and glutamate 467 contribute to the active site.

It belongs to the glycosyl hydrolase 9 (cellulase E) family.

It is found in the secreted. The enzyme catalyses Endohydrolysis of (1-&gt;4)-beta-D-glucosidic linkages in cellulose, lichenin and cereal beta-D-glucans.. This chain is Endoglucanase 17 (GLU13), found in Oryza sativa subsp. japonica (Rice).